The primary structure comprises 629 residues: 1-deoxy-D-xylulose-5-phosphate synthase (629 aa).

Thiamine diphosphate contacts are provided by residues histidine 72 and 113–115 (GHA). A Mg(2+)-binding site is contributed by aspartate 144. Thiamine diphosphate contacts are provided by residues 145–146 (GA), asparagine 174, tyrosine 287, and glutamate 370. Residue asparagine 174 coordinates Mg(2+).

It belongs to the transketolase family. DXPS subfamily. As to quaternary structure, homodimer. It depends on Mg(2+) as a cofactor. The cofactor is thiamine diphosphate.

It carries out the reaction D-glyceraldehyde 3-phosphate + pyruvate + H(+) = 1-deoxy-D-xylulose 5-phosphate + CO2. Its pathway is metabolic intermediate biosynthesis; 1-deoxy-D-xylulose 5-phosphate biosynthesis; 1-deoxy-D-xylulose 5-phosphate from D-glyceraldehyde 3-phosphate and pyruvate: step 1/1. Catalyzes the acyloin condensation reaction between C atoms 2 and 3 of pyruvate and glyceraldehyde 3-phosphate to yield 1-deoxy-D-xylulose-5-phosphate (DXP). In Prochlorococcus marinus (strain MIT 9312), this protein is 1-deoxy-D-xylulose-5-phosphate synthase.